Reading from the N-terminus, the 158-residue chain is SsrA-binding protein (158 aa).

It belongs to the SmpB family.

The protein localises to the cytoplasm. Functionally, required for rescue of stalled ribosomes mediated by trans-translation. Binds to transfer-messenger RNA (tmRNA), required for stable association of tmRNA with ribosomes. tmRNA and SmpB together mimic tRNA shape, replacing the anticodon stem-loop with SmpB. tmRNA is encoded by the ssrA gene; the 2 termini fold to resemble tRNA(Ala) and it encodes a 'tag peptide', a short internal open reading frame. During trans-translation Ala-aminoacylated tmRNA acts like a tRNA, entering the A-site of stalled ribosomes, displacing the stalled mRNA. The ribosome then switches to translate the ORF on the tmRNA; the nascent peptide is terminated with the 'tag peptide' encoded by the tmRNA and targeted for degradation. The ribosome is freed to recommence translation, which seems to be the essential function of trans-translation. The sequence is that of SsrA-binding protein from Bartonella tribocorum (strain CIP 105476 / IBS 506).